Here is a 383-residue protein sequence, read N- to C-terminus: Izumo sperm-egg fusion protein 1 (383 aa).

The signal sequence occupies residues 1 to 21 (MGLHFTLLLAALANCLCPARL). Disulfide bonds link cysteine 22-cysteine 149, cysteine 25-cysteine 152, cysteine 135-cysteine 159, cysteine 139-cysteine 165, and cysteine 182-cysteine 233. The Extracellular segment spans residues 22–306 (CIICDPFVVA…HRPEKKLKSR (285 aa)). The interval 148-160 (WCNKCEKQMHFCR) is important for interaction with IZUMO1R. An Ig-like C2-type domain is found at 167 to 251 (ERQIEVHRLE…PATIIYYHVT (85 aa)). Residue asparagine 204 is glycosylated (N-linked (GlcNAc...) asparagine). Residues 307–327 (LLILLILGFVVLVASVIASVL) form a helical membrane-spanning segment. Topologically, residues 328 to 383 (HFRKTRVKSKNSNVENKTSAAEFKSEAESPQKMGSRKLSQAEFHTDSSDKVEEADN) are cytoplasmic. The segment at 335 to 383 (KSKNSNVENKTSAAEFKSEAESPQKMGSRKLSQAEFHTDSSDKVEEADN) is disordered. The segment covering 337-346 (KNSNVENKTS) has biased composition (polar residues). Phosphoserine is present on residues serine 339, serine 346, and serine 366. The span at 370-383 (FHTDSSDKVEEADN) shows a compositional bias: basic and acidic residues. Threonine 372 is modified (phosphothreonine).

This sequence belongs to the Izumo family. In terms of assembly, monomer, homodimer; disulfide-linked and homooligomer; depending on the context. Interacts with IZUMO1R/JUNO. IZUMO1 and IZUMO1R/JUNO form a complex with 1:1 stoichiometry. In gamete recognition, IZUMO1R/JUNO first binds to monomeric IZUMO1. The weak, but specific interaction with IZUMO1R/JUNO induces IZUMO1 homodimerization. The process follows a tight binding phase where IZUMO1 bends the entire structure towards the sperm membrane side through a thiol-disulfide exchange reaction. The molecule no longer binds to IZUMO1R/JUNO and instead binds to a putative second oocyte receptor. Interacts with ACE3. Part of a oolemmal binding multimeric complex (IZUMO1 complex) composed at least of IZUMO1 and GLIPR1L1; the complex assemblage is influenced by the maturation status of the male germ cell. Interacts with GLIPR1L1. Interacts with FREY; the interaction retains IZUMO1 at the endoplasmic reticulum membrane and coordinates IZUMO1 complex assembly. Interacts with WDR54. Forms a complex with SPACA6 and TMEM81 on spermatocyte cell membrane. N-glycosylated. Glycosylation is not essential for fusion and for proper protein trafficking in sperm. Post-translationally, phosphorylated. The cytoplasmic C-terminus is phosphorylated and undergoes phosphorylation changes during epididymal transit. Expressed in sperm (at protein level).

It is found in the cell membrane. The protein localises to the cytoplasmic vesicle. Its subcellular location is the secretory vesicle. The protein resides in the acrosome membrane. Essential sperm cell-surface protein required for fertilization by acting as a ligand for IZUMO1R/JUNO receptor on egg. The IZUMO1:IZUMO1R/JUNO interaction is a necessary adhesion event between sperm and egg that is required for fertilization but is not sufficient for cell fusion. The ligand-receptor interaction probably does not act as a membrane 'fusogen'. Plays a critical role in sperm-oolemma binding prior to plasma membrane fusion. Can mediate cell-cell fusion in cultured mammalian cells independently of its binding to IZUMO1R/JUNO. The protein is Izumo sperm-egg fusion protein 1 of Rattus norvegicus (Rat).